Here is a 332-residue protein sequence, read N- to C-terminus: Lipoyl synthase (332 aa).

Residues cysteine 74, cysteine 79, cysteine 85, cysteine 100, cysteine 104, cysteine 107, and serine 314 each contribute to the [4Fe-4S] cluster site. The Radical SAM core domain maps to 85–303; the sequence is CFGKGTATFM…EEEAYKMGFT (219 aa).

It belongs to the radical SAM superfamily. Lipoyl synthase family. It depends on [4Fe-4S] cluster as a cofactor.

The protein localises to the cytoplasm. The catalysed reaction is [[Fe-S] cluster scaffold protein carrying a second [4Fe-4S](2+) cluster] + N(6)-octanoyl-L-lysyl-[protein] + 2 oxidized [2Fe-2S]-[ferredoxin] + 2 S-adenosyl-L-methionine + 4 H(+) = [[Fe-S] cluster scaffold protein] + N(6)-[(R)-dihydrolipoyl]-L-lysyl-[protein] + 4 Fe(3+) + 2 hydrogen sulfide + 2 5'-deoxyadenosine + 2 L-methionine + 2 reduced [2Fe-2S]-[ferredoxin]. The protein operates within protein modification; protein lipoylation via endogenous pathway; protein N(6)-(lipoyl)lysine from octanoyl-[acyl-carrier-protein]: step 2/2. Its function is as follows. Catalyzes the radical-mediated insertion of two sulfur atoms into the C-6 and C-8 positions of the octanoyl moiety bound to the lipoyl domains of lipoate-dependent enzymes, thereby converting the octanoylated domains into lipoylated derivatives. This Paracidovorax citrulli (strain AAC00-1) (Acidovorax citrulli) protein is Lipoyl synthase.